Here is a 236-residue protein sequence, read N- to C-terminus: Histone H1 (236 aa).

Basic and acidic residues predominate over residues 1 to 10 (MPPKKTETKA). Disordered regions lie at residues 1–36 (MPPK…SPST) and 94–236 (KGVF…AEKA). The span at 11–36 (ADASAAAAPAPAAAPTSAPKTKSPST) shows a compositional bias: low complexity. The H15 domain occupies 36 to 111 (THASYLDMIT…GPSGGTKLAK (76 aa)). The segment covering 109-122 (LAKKVAKPAPKKAA) has biased composition (basic residues). Residues 123–150 (PKKETKEKKPAAAKKEGAAKKETKEKKA) show a composition bias toward basic and acidic residues. The span at 153–162 (AKKAAAPKKA) shows a compositional bias: low complexity. Residues 165–174 (PKKEVKEKKA) are compositionally biased toward basic and acidic residues. Low complexity predominate over residues 202 to 220 (AKSTAKPAAAKKAAAPKKA). Positions 224–236 (KKAEKAEPAAEKA) are enriched in basic and acidic residues.

Belongs to the histone H1/H5 family.

It is found in the nucleus. Its subcellular location is the chromosome. Its function is as follows. Could act as an H1-type linker histone. The sequence is that of Histone H1 (hH1) from Neurospora crassa (strain ATCC 24698 / 74-OR23-1A / CBS 708.71 / DSM 1257 / FGSC 987).